The following is a 456-amino-acid chain: Glutamyl-tRNA(Gln) amidotransferase subunit A (456 aa).

Catalysis depends on charge relay system residues lysine 74 and serine 149. Serine 173 (acyl-ester intermediate) is an active-site residue.

Belongs to the amidase family. GatA subfamily. Heterotrimer of A, B and C subunits.

The catalysed reaction is L-glutamyl-tRNA(Gln) + L-glutamine + ATP + H2O = L-glutaminyl-tRNA(Gln) + L-glutamate + ADP + phosphate + H(+). Allows the formation of correctly charged Gln-tRNA(Gln) through the transamidation of misacylated Glu-tRNA(Gln) in organisms which lack glutaminyl-tRNA synthetase. The reaction takes place in the presence of glutamine and ATP through an activated gamma-phospho-Glu-tRNA(Gln). This is Glutamyl-tRNA(Gln) amidotransferase subunit A from Methanobrevibacter smithii (strain ATCC 35061 / DSM 861 / OCM 144 / PS).